A 122-amino-acid polypeptide reads, in one-letter code: Large ribosomal subunit protein uL14 (122 aa).

The protein belongs to the universal ribosomal protein uL14 family. In terms of assembly, part of the 50S ribosomal subunit. Forms a cluster with proteins L3 and L19. In the 70S ribosome, L14 and L19 interact and together make contacts with the 16S rRNA in bridges B5 and B8.

Its function is as follows. Binds to 23S rRNA. Forms part of two intersubunit bridges in the 70S ribosome. The protein is Large ribosomal subunit protein uL14 of Polaromonas naphthalenivorans (strain CJ2).